The sequence spans 105 residues: Nucleoid-associated protein OCAR_7544/OCA5_c05960 (105 aa).

It belongs to the YbaB/EbfC family. In terms of assembly, homodimer.

The protein localises to the cytoplasm. Its subcellular location is the nucleoid. Its function is as follows. Binds to DNA and alters its conformation. May be involved in regulation of gene expression, nucleoid organization and DNA protection. This is Nucleoid-associated protein OCAR_7544/OCA5_c05960 from Afipia carboxidovorans (strain ATCC 49405 / DSM 1227 / KCTC 32145 / OM5) (Oligotropha carboxidovorans).